The sequence spans 207 residues: Small ribosomal subunit protein uS4 (207 aa).

Positions K31–G53 are disordered. In terms of domain architecture, S4 RNA-binding spans C97 to V157.

The protein belongs to the universal ribosomal protein uS4 family. In terms of assembly, part of the 30S ribosomal subunit. Contacts protein S5. The interaction surface between S4 and S5 is involved in control of translational fidelity.

Functionally, one of the primary rRNA binding proteins, it binds directly to 16S rRNA where it nucleates assembly of the body of the 30S subunit. With S5 and S12 plays an important role in translational accuracy. This chain is Small ribosomal subunit protein uS4, found in Acidovorax ebreus (strain TPSY) (Diaphorobacter sp. (strain TPSY)).